The chain runs to 406 residues: Arginine deiminase (406 aa).

The active-site Amidino-cysteine intermediate is Cys396.

The protein belongs to the arginine deiminase family.

The protein resides in the cytoplasm. It catalyses the reaction L-arginine + H2O = L-citrulline + NH4(+). It functions in the pathway amino-acid degradation; L-arginine degradation via ADI pathway; carbamoyl phosphate from L-arginine: step 1/2. The polypeptide is Arginine deiminase (Salmonella typhimurium (strain LT2 / SGSC1412 / ATCC 700720)).